Here is a 259-residue protein sequence, read N- to C-terminus: DNA-directed RNA polymerase subunit Rpo3 (259 aa).

The protein belongs to the archaeal Rpo3/eukaryotic RPB3 RNA polymerase subunit family. Part of the RNA polymerase complex.

It is found in the cytoplasm. It catalyses the reaction RNA(n) + a ribonucleoside 5'-triphosphate = RNA(n+1) + diphosphate. DNA-dependent RNA polymerase (RNAP) catalyzes the transcription of DNA into RNA using the four ribonucleoside triphosphates as substrates. The chain is DNA-directed RNA polymerase subunit Rpo3 from Pyrobaculum arsenaticum (strain DSM 13514 / JCM 11321 / PZ6).